Here is a 102-residue protein sequence, read N- to C-terminus: Monothiol glutaredoxin-S6 (102 aa).

A Glutaredoxin domain is found at 1–101; it reads MESVRSLVED…AMLRRAGAIW (101 aa). Cys21 is a [2Fe-2S] cluster binding site.

The protein belongs to the glutaredoxin family. CC-type subfamily.

It localises to the cytoplasm. In terms of biological role, may only reduce GSH-thiol disulfides, but not protein disulfides. This is Monothiol glutaredoxin-S6 (GRXS6) from Arabidopsis thaliana (Mouse-ear cress).